Reading from the N-terminus, the 233-residue chain is Ribonuclease 3 (233 aa).

An RNase III domain is found at 4 to 126; that stretch reads LNKLMERLGH…IVGAIYIDAG (123 aa). A Mg(2+)-binding site is contributed by glutamate 39. Aspartate 43 is an active-site residue. Mg(2+) is bound by residues aspartate 112 and glutamate 115. Glutamate 115 is a catalytic residue. The 70-residue stretch at 153-222 folds into the DRBM domain; the sequence is DAKSLLQEWL…AKRFLELLDD (70 aa).

The protein belongs to the ribonuclease III family. As to quaternary structure, homodimer. Mg(2+) is required as a cofactor.

It is found in the cytoplasm. It catalyses the reaction Endonucleolytic cleavage to 5'-phosphomonoester.. Digests double-stranded RNA. Involved in the processing of primary rRNA transcript to yield the immediate precursors to the large and small rRNAs (23S and 16S). Processes some mRNAs, and tRNAs when they are encoded in the rRNA operon. Processes pre-crRNA and tracrRNA of type II CRISPR loci if present in the organism. In Coxiella burnetii (strain Dugway 5J108-111), this protein is Ribonuclease 3.